Consider the following 136-residue polypeptide: Protein NrdI (136 aa).

This sequence belongs to the NrdI family.

Functionally, probably involved in ribonucleotide reductase function. The sequence is that of Protein NrdI from Salmonella newport (strain SL254).